A 160-amino-acid chain; its full sequence is SsrA-binding protein (160 aa).

Residues 131 to 160 (KKEYDKRDTEKARDSDREIQRAIRSKGKED) are disordered.

It belongs to the SmpB family.

Its subcellular location is the cytoplasm. Functionally, required for rescue of stalled ribosomes mediated by trans-translation. Binds to transfer-messenger RNA (tmRNA), required for stable association of tmRNA with ribosomes. tmRNA and SmpB together mimic tRNA shape, replacing the anticodon stem-loop with SmpB. tmRNA is encoded by the ssrA gene; the 2 termini fold to resemble tRNA(Ala) and it encodes a 'tag peptide', a short internal open reading frame. During trans-translation Ala-aminoacylated tmRNA acts like a tRNA, entering the A-site of stalled ribosomes, displacing the stalled mRNA. The ribosome then switches to translate the ORF on the tmRNA; the nascent peptide is terminated with the 'tag peptide' encoded by the tmRNA and targeted for degradation. The ribosome is freed to recommence translation, which seems to be the essential function of trans-translation. The chain is SsrA-binding protein from Azotobacter vinelandii (strain DJ / ATCC BAA-1303).